Here is a 600-residue protein sequence, read N- to C-terminus: Myelin expression factor 2 (600 aa).

The interval 1-101 (MADANKAEVP…GEKKGPNRNR (101 aa)) is disordered. Residue Thr13 is modified to Phosphothreonine. Ser17 is modified (phosphoserine). Residues 27–42 (GEPRREPHPAEAEKQQ) are compositionally biased toward basic and acidic residues. Residue Lys53 forms a Glycyl lysine isopeptide (Lys-Gly) (interchain with G-Cter in SUMO2) linkage. Composition is skewed to basic and acidic residues over residues 54–72 (MEND…EKST) and 83–96 (YSKD…EKKG). RRM domains lie at 100 to 178 (NRVF…EDPD) and 233 to 310 (STIF…MDDK). Arg406 carries the post-translational modification Omega-N-methylarginine. A Phosphoserine modification is found at Ser431. An RRM 3 domain is found at 523 to 599 (NQIFVRNLPF…REIDVRLDRN (77 aa)).

Monomer.

It localises to the nucleus. In terms of biological role, transcriptional repressor of the myelin basic protein gene (MBP). Binds to the proximal MB1 element 5'-TTGTCC-3' of the MBP promoter. Its binding to MB1 and function are inhibited by PURA. This is Myelin expression factor 2 (MYEF2) from Homo sapiens (Human).